Here is a 953-residue protein sequence, read N- to C-terminus: Nonsense-mediated mRNA decay factor SMG8 (953 aa).

Disordered stretches follow at residues 571–604 (AEDAELDPDEEDEELPTGEREEQHITQSNGCSQP) and 629–653 (PCFDQSSSSEAESTCSGTSSEESNT). The span at 573-586 (DAELDPDEEDEELP) shows a compositional bias: acidic residues. A compositionally biased stretch (polar residues) spans 595–604 (ITQSNGCSQP). Over residues 634–653 (SSSSEAESTCSGTSSEESNT) the composition is skewed to low complexity.

It belongs to the SMG8 family.

In terms of biological role, involved in nonsense-mediated decay (NMD) of mRNAs containing premature stop codons. Probable component of kinase complex containing nonC and recruited to stalled ribosomes. The chain is Nonsense-mediated mRNA decay factor SMG8 from Drosophila pseudoobscura pseudoobscura (Fruit fly).